The following is a 212-amino-acid chain: Protein-L-isoaspartate O-methyltransferase (212 aa).

Serine 60 is an active-site residue.

The protein belongs to the methyltransferase superfamily. L-isoaspartyl/D-aspartyl protein methyltransferase family.

It is found in the cytoplasm. It carries out the reaction [protein]-L-isoaspartate + S-adenosyl-L-methionine = [protein]-L-isoaspartate alpha-methyl ester + S-adenosyl-L-homocysteine. In terms of biological role, catalyzes the methyl esterification of L-isoaspartyl residues in peptides and proteins that result from spontaneous decomposition of normal L-aspartyl and L-asparaginyl residues. It plays a role in the repair and/or degradation of damaged proteins. The sequence is that of Protein-L-isoaspartate O-methyltransferase from Methanococcus maripaludis (strain C6 / ATCC BAA-1332).